The following is a 218-amino-acid chain: Carboxylesterase 2 (218 aa).

Active-site charge relay system residues include Ser114, Asp168, and His199.

This sequence belongs to the AB hydrolase superfamily. AB hydrolase 2 family. Homodimer.

The catalysed reaction is a carboxylic ester + H2O = an alcohol + a carboxylate + H(+). Its function is as follows. Hydrolyzes carboxylic ester bonds with relatively broad substrate specificity. This chain is Carboxylesterase 2 (estB), found in Pseudomonas fluorescens.